A 274-amino-acid chain; its full sequence is NH(3)-dependent NAD(+) synthetase (274 aa).

Residue 46-53 participates in ATP binding; the sequence is GISGGQDS. Asp52 lines the Mg(2+) pocket. Arg140 lines the deamido-NAD(+) pocket. Thr160 serves as a coordination point for ATP. Position 165 (Glu165) interacts with Mg(2+). Residues Lys173 and Asp180 each contribute to the deamido-NAD(+) site. The ATP site is built by Lys189 and Thr211. Residue 260–261 participates in deamido-NAD(+) binding; that stretch reads HK.

Belongs to the NAD synthetase family. In terms of assembly, homodimer.

The enzyme catalyses deamido-NAD(+) + NH4(+) + ATP = AMP + diphosphate + NAD(+) + H(+). The protein operates within cofactor biosynthesis; NAD(+) biosynthesis; NAD(+) from deamido-NAD(+) (ammonia route): step 1/1. Functionally, catalyzes the ATP-dependent amidation of deamido-NAD to form NAD. Uses ammonia as a nitrogen source. This Listeria innocua serovar 6a (strain ATCC BAA-680 / CLIP 11262) protein is NH(3)-dependent NAD(+) synthetase.